We begin with the raw amino-acid sequence, 75 residues long: ATP synthase subunit c (75 aa).

Transmembrane regions (helical) follow at residues 9-29 (IGAG…GNIW) and 52-72 (IGFA…LILL).

It belongs to the ATPase C chain family. In terms of assembly, F-type ATPases have 2 components, F(1) - the catalytic core - and F(0) - the membrane proton channel. F(1) has five subunits: alpha(3), beta(3), gamma(1), delta(1), epsilon(1). F(0) has four main subunits: a(1), b(1), b'(1) and c(10-14). The alpha and beta chains form an alternating ring which encloses part of the gamma chain. F(1) is attached to F(0) by a central stalk formed by the gamma and epsilon chains, while a peripheral stalk is formed by the delta, b and b' chains.

It is found in the cell inner membrane. Its function is as follows. F(1)F(0) ATP synthase produces ATP from ADP in the presence of a proton or sodium gradient. F-type ATPases consist of two structural domains, F(1) containing the extramembraneous catalytic core and F(0) containing the membrane proton channel, linked together by a central stalk and a peripheral stalk. During catalysis, ATP synthesis in the catalytic domain of F(1) is coupled via a rotary mechanism of the central stalk subunits to proton translocation. Functionally, key component of the F(0) channel; it plays a direct role in translocation across the membrane. A homomeric c-ring of between 10-14 subunits forms the central stalk rotor element with the F(1) delta and epsilon subunits. The chain is ATP synthase subunit c from Rhodospirillum rubrum (strain ATCC 11170 / ATH 1.1.1 / DSM 467 / LMG 4362 / NCIMB 8255 / S1).